The sequence spans 867 residues: uncharacterized protein (867 aa).

Residues 76–108 (CDFCRQKKIRCDMDQSPRPGNACINCRKHHLDC) constitute a DNA-binding region (zn(2)-C6 fungal-type). Disordered stretches follow at residues 110-167 (FTRT…ITPV) and 217-257 (PQLA…NSNL). Polar residues-rich tracts occupy residues 137–167 (SAKS…ITPV) and 248–257 (SISSYTNSNL).

Its subcellular location is the nucleus. This is an uncharacterized protein from Schizosaccharomyces pombe (strain 972 / ATCC 24843) (Fission yeast).